A 162-amino-acid polypeptide reads, in one-letter code: Probable chemoreceptor glutamine deamidase CheD (162 aa).

Belongs to the CheD family.

It catalyses the reaction L-glutaminyl-[protein] + H2O = L-glutamyl-[protein] + NH4(+). Its function is as follows. Probably deamidates glutamine residues to glutamate on methyl-accepting chemotaxis receptors (MCPs), playing an important role in chemotaxis. The chain is Probable chemoreceptor glutamine deamidase CheD from Clostridium novyi (strain NT).